An 86-amino-acid polypeptide reads, in one-letter code: Small ribosomal subunit protein bS20 (86 aa).

The segment at 1–22 is disordered; that stretch reads MANIKSQIKRIRTNERRRLRNQ. The span at 7–20 shows a compositional bias: basic residues; the sequence is QIKRIRTNERRRLR.

This sequence belongs to the bacterial ribosomal protein bS20 family.

Binds directly to 16S ribosomal RNA. This Mycolicibacterium smegmatis (strain ATCC 700084 / mc(2)155) (Mycobacterium smegmatis) protein is Small ribosomal subunit protein bS20.